Reading from the N-terminus, the 222-residue chain is 7-cyano-7-deazaguanine synthase (222 aa).

Residue 8 to 18 participates in ATP binding; sequence LSGGMDSTTAA. Zn(2+) is bound by residues cysteine 187, cysteine 195, cysteine 198, and cysteine 201.

This sequence belongs to the QueC family. Zn(2+) serves as cofactor.

It catalyses the reaction 7-carboxy-7-deazaguanine + NH4(+) + ATP = 7-cyano-7-deazaguanine + ADP + phosphate + H2O + H(+). It functions in the pathway purine metabolism; 7-cyano-7-deazaguanine biosynthesis. Catalyzes the ATP-dependent conversion of 7-carboxy-7-deazaguanine (CDG) to 7-cyano-7-deazaguanine (preQ(0)). This chain is 7-cyano-7-deazaguanine synthase, found in Nautilia profundicola (strain ATCC BAA-1463 / DSM 18972 / AmH).